Here is a 179-residue protein sequence, read N- to C-terminus: UPF0227 protein PM0825 (179 aa).

Belongs to the UPF0227 family.

The polypeptide is UPF0227 protein PM0825 (Pasteurella multocida (strain Pm70)).